The primary structure comprises 411 residues: tRNA (uracil(54)-C(5))-methyltransferase (411 aa).

The [4Fe-4S] cluster site is built by C62, C68, C71, and C138. S-adenosyl-L-methionine contacts are provided by residues Q254, Y280, T285, 301–302 (DS), D328, and D342. The active-site Nucleophile is C369. E402 (proton acceptor) is an active-site residue.

Belongs to the class I-like SAM-binding methyltransferase superfamily. RNA M5U methyltransferase family.

It carries out the reaction uridine(54) in tRNA + S-adenosyl-L-methionine = 5-methyluridine(54) in tRNA + S-adenosyl-L-homocysteine + H(+). Catalyzes the formation of 5-methyl-uridine at position 54 (m5U54) in tRNA. This chain is tRNA (uracil(54)-C(5))-methyltransferase, found in Pyrococcus furiosus (strain ATCC 43587 / DSM 3638 / JCM 8422 / Vc1).